Here is a 116-residue protein sequence, read N- to C-terminus: U30-theraphotoxin-Cg1b (116 aa).

The N-terminal stretch at 1 to 17 is a signal peptide; that stretch reads MKLCVLTIATLLVTATS. A propeptide spanning residues 18-53 is cleaved from the precursor; sequence LETQKEIAEGNELTREETPSLVEHKEDEAAAASEKR. The disordered stretch occupies residues 25 to 45; it reads AEGNELTREETPSLVEHKEDE. Intrachain disulfides connect C55-C69, C62-C75, C66-C112, and C68-C88.

Belongs to the neurotoxin 03 (Tx2) family. 02 subfamily. In terms of tissue distribution, expressed by the venom gland.

It localises to the secreted. Its function is as follows. Probable ion channel inhibitor. In Chilobrachys guangxiensis (Chinese earth tiger tarantula), this protein is U30-theraphotoxin-Cg1b.